The chain runs to 207 residues: Large ribosomal subunit protein uL4 (207 aa).

Residues 45–80 (RQGTHAVKNRSEVRGGGRKPWRQKGTGRARQGSTRS) are disordered. The segment covering 60 to 71 (GGRKPWRQKGTG) has biased composition (basic residues).

This sequence belongs to the universal ribosomal protein uL4 family. In terms of assembly, part of the 50S ribosomal subunit.

One of the primary rRNA binding proteins, this protein initially binds near the 5'-end of the 23S rRNA. It is important during the early stages of 50S assembly. It makes multiple contacts with different domains of the 23S rRNA in the assembled 50S subunit and ribosome. Its function is as follows. Forms part of the polypeptide exit tunnel. The chain is Large ribosomal subunit protein uL4 from Oceanobacillus iheyensis (strain DSM 14371 / CIP 107618 / JCM 11309 / KCTC 3954 / HTE831).